Reading from the N-terminus, the 187-residue chain is Mitochondrial import receptor subunit TOM20-4 (187 aa).

N-acetylmethionine is present on Met1. Residues 1-160 (MDMQNENERL…QKKTSEFKYD (160 aa)) are Cytoplasmic-facing. Residues 84 to 117 (LSFGFLSSDQTEASDNFEKASQFFQLAVEEQPES) form a TPR repeat. The chain crosses the membrane as a helical span at residues 161-178 (VFGWVILASYVVAWISFA). At 179–187 (NSQTPVSRQ) the chain is on the mitochondrial intermembrane side. Positions 179 to 187 (NSQTPVSRQ) match the AKR2A-binding sequence (ABS) required for mitochondrion outer membrane targeting motif.

Belongs to the Tom20 family. In terms of assembly, forms part of the preprotein translocase complex of the outer mitochondrial membrane (TOM complex) which consists of at least 6 different proteins (TOM5, TOM6, TOM7, TOM20, TOM22/TOM9 and TOM40). Interacts with a variety of mitochondrial precursor proteins. Interacts with AKR2A. Component of a mitochondrial large protein complex that contains, at least, MIC60, DGS1, TOM40, TOM20 proteins, and petC/RISP. Post-translationally, the N-terminus is blocked. In terms of tissue distribution, expressed in roots, flowers, young cotyledons and leaves.

The protein localises to the mitochondrion outer membrane. Central component of the receptor complex responsible for the recognition and translocation of cytosolically synthesized mitochondrial preproteins. Together with TOM22 functions as the transit peptide receptor at the surface of the mitochondrion outer membrane and facilitates the movement of preproteins into the translocation pore. In Arabidopsis thaliana (Mouse-ear cress), this protein is Mitochondrial import receptor subunit TOM20-4.